The following is a 391-amino-acid chain: MTNNTKSITLNLGPQHPATHGVLRLILEMDGEVVNNADPHIGLLHRGTEKLIEHKTYLQAIPYFDRLDYVSPMCQEHAFALAAESLLECEIPRRAQFIRVLFSELTRILNHTLNIGSQALDVGATTPLLWLFEEREKIMEFYERVSGSRMHSNYFRPGGVAEDLPDGLLEDIDKFIQQFPPKLQDIENLLNENRLWKQRLVDIGVVSQKEAMDWGFSGPMLRGSGIAWDLRKSNPYDVYAEMDFEVPIGKNGDCYDRYLVRMLEMYESVKIIKQCIEKMPQGPVKTDDPKLTPPTRAKMKESMEAMIHHFKLYTEGYDVPAGEIYKAVEAPKGEFGVYLYSTGGNRPYRCRIKAPGFAHLQGLDFMSKGHLMADVITIIATLDIVFGEIDR.

It belongs to the complex I 49 kDa subunit family. As to quaternary structure, NDH-1 is composed of 14 different subunits. Subunits NuoB, C, D, E, F, and G constitute the peripheral sector of the complex.

It is found in the cell inner membrane. It catalyses the reaction a quinone + NADH + 5 H(+)(in) = a quinol + NAD(+) + 4 H(+)(out). NDH-1 shuttles electrons from NADH, via FMN and iron-sulfur (Fe-S) centers, to quinones in the respiratory chain. The immediate electron acceptor for the enzyme in this species is believed to be ubiquinone. Couples the redox reaction to proton translocation (for every two electrons transferred, four hydrogen ions are translocated across the cytoplasmic membrane), and thus conserves the redox energy in a proton gradient. This Rickettsia bellii (strain OSU 85-389) protein is NADH-quinone oxidoreductase subunit D.